Reading from the N-terminus, the 251-residue chain is Probable transcriptional regulatory protein DET0444 (251 aa).

It belongs to the TACO1 family.

The protein localises to the cytoplasm. The chain is Probable transcriptional regulatory protein DET0444 from Dehalococcoides mccartyi (strain ATCC BAA-2266 / KCTC 15142 / 195) (Dehalococcoides ethenogenes (strain 195)).